Here is a 354-residue protein sequence, read N- to C-terminus: Holliday junction branch migration complex subunit RuvB (354 aa).

Residues 1–38 form a disordered region; the sequence is MSDFERTEFELPPGVGHSQNEDLNPQQTAGDSDIDTSL. The interval 2-199 is large ATPase domain (RuvB-L); the sequence is SDFERTEFEL…FGFTAQMEFY (198 aa). Residues 17 to 30 are compositionally biased toward polar residues; sequence HSQNEDLNPQQTAG. Residues Leu38, Arg39, Gly80, Lys83, Thr84, Thr85, 146–148, Arg189, Tyr199, and Arg236 contribute to the ATP site; that span reads EDF. Thr84 lines the Mg(2+) pocket. The segment at 200–270 is small ATPAse domain (RuvB-S); the sequence is DTADLTRVVT…VARAALLVFD (71 aa). Residues 273–354 form a head domain (RuvB-H) region; it reads ESGLDRLDRA…LEPPEGTIGL (82 aa). DNA-binding residues include Arg328 and Arg333.

Belongs to the RuvB family. Homohexamer. Forms an RuvA(8)-RuvB(12)-Holliday junction (HJ) complex. HJ DNA is sandwiched between 2 RuvA tetramers; dsDNA enters through RuvA and exits via RuvB. An RuvB hexamer assembles on each DNA strand where it exits the tetramer. Each RuvB hexamer is contacted by two RuvA subunits (via domain III) on 2 adjacent RuvB subunits; this complex drives branch migration. In the full resolvosome a probable DNA-RuvA(4)-RuvB(12)-RuvC(2) complex forms which resolves the HJ.

The protein resides in the cytoplasm. The enzyme catalyses ATP + H2O = ADP + phosphate + H(+). The RuvA-RuvB-RuvC complex processes Holliday junction (HJ) DNA during genetic recombination and DNA repair, while the RuvA-RuvB complex plays an important role in the rescue of blocked DNA replication forks via replication fork reversal (RFR). RuvA specifically binds to HJ cruciform DNA, conferring on it an open structure. The RuvB hexamer acts as an ATP-dependent pump, pulling dsDNA into and through the RuvAB complex. RuvB forms 2 homohexamers on either side of HJ DNA bound by 1 or 2 RuvA tetramers; 4 subunits per hexamer contact DNA at a time. Coordinated motions by a converter formed by DNA-disengaged RuvB subunits stimulates ATP hydrolysis and nucleotide exchange. Immobilization of the converter enables RuvB to convert the ATP-contained energy into a lever motion, pulling 2 nucleotides of DNA out of the RuvA tetramer per ATP hydrolyzed, thus driving DNA branch migration. The RuvB motors rotate together with the DNA substrate, which together with the progressing nucleotide cycle form the mechanistic basis for DNA recombination by continuous HJ branch migration. Branch migration allows RuvC to scan DNA until it finds its consensus sequence, where it cleaves and resolves cruciform DNA. This chain is Holliday junction branch migration complex subunit RuvB, found in Corynebacterium jeikeium (strain K411).